We begin with the raw amino-acid sequence, 271 residues long: Acetyl-coenzyme A carboxylase carboxyl transferase subunit beta (271 aa).

The 251-residue stretch at 21–271 (LWIQCPYCKQ…LGDLLALHTA (251 aa)) folds into the CoA carboxyltransferase N-terminal domain. Positions 25, 28, 43, and 46 each coordinate Zn(2+). The C4-type zinc-finger motif lies at 25–46 (CPYCKQGSYRESLGNAQVCPHC).

This sequence belongs to the AccD/PCCB family. As to quaternary structure, acetyl-CoA carboxylase is a heterohexamer composed of biotin carboxyl carrier protein (AccB), biotin carboxylase (AccC) and two subunits each of ACCase subunit alpha (AccA) and ACCase subunit beta (AccD). Zn(2+) serves as cofactor.

It is found in the cytoplasm. It carries out the reaction N(6)-carboxybiotinyl-L-lysyl-[protein] + acetyl-CoA = N(6)-biotinyl-L-lysyl-[protein] + malonyl-CoA. The protein operates within lipid metabolism; malonyl-CoA biosynthesis; malonyl-CoA from acetyl-CoA: step 1/1. Functionally, component of the acetyl coenzyme A carboxylase (ACC) complex. Biotin carboxylase (BC) catalyzes the carboxylation of biotin on its carrier protein (BCCP) and then the CO(2) group is transferred by the transcarboxylase to acetyl-CoA to form malonyl-CoA. This Lacticaseibacillus paracasei (strain ATCC 334 / BCRC 17002 / CCUG 31169 / CIP 107868 / KCTC 3260 / NRRL B-441) (Lactobacillus paracasei) protein is Acetyl-coenzyme A carboxylase carboxyl transferase subunit beta.